Reading from the N-terminus, the 879-residue chain is Pyruvate dehydrogenase phosphatase regulatory subunit, mitochondrial (879 aa).

The transit peptide at 1-27 directs the protein to the mitochondrion; it reads MMFYRLLSIVGRQRASPGWQNWSSARN.

The protein belongs to the GcvT family. As to quaternary structure, heterodimer of a catalytic (PDP1) and a regulatory (PDPR) subunit.

Its subcellular location is the mitochondrion matrix. In terms of biological role, decreases the sensitivity of PDP1 to magnesium ions, and this inhibition is reversed by the polyamine spermine. In Homo sapiens (Human), this protein is Pyruvate dehydrogenase phosphatase regulatory subunit, mitochondrial (PDPR).